A 139-amino-acid polypeptide reads, in one-letter code: Toxin FitB (139 aa).

The PINc domain occupies 2-123; it reads ILLDTNVISE…HSLTVATRDT (122 aa). 2 residues coordinate Mg(2+): Asp-5 and Asp-104.

The protein belongs to the PINc/VapC protein family. As to quaternary structure, forms a heterodimer with FitA, 4 FitAB heterodimers form a complex that binds to promoter DNA. The complex is also seen in solution. This protein does not actually contact DNA. The cofactor is Mg(2+).

In terms of biological role, toxic component of a type II toxin-antitoxin (TA) system. Plays a role in the speed with which bacteria traverse human epithelial cells; disruption of the locus increases the speed of trafficking about 2-4-fold. FitAB binds to its own promoter better than FitA alone. The expected nuclease activity was not observed for the FitAB complex, perhaps because FitA (the antitoxin) prevents metal binding and thus catalysis by FitB. The chain is Toxin FitB (fitB) from Neisseria gonorrhoeae (strain ATCC 700825 / FA 1090).